Here is a 272-residue protein sequence, read N- to C-terminus: MAVPPLFFLLTLLSLPSLLISAGASNAYPSIPGTAPIDGGFTDELKPIRREVYGNGKIYDISHRYTPEMPSWDSSEGIGRFLWLAASMKNGSLANNSEMKIPTHTGTHVDSPGHVYDKYYDAGFDVDSLDLQVLNGLALLVDVPKDKNITAEVMKSLHIPKGVSRVLFRTLNTDRRLMFKKEFDTSYVGFMKDGAQWLVDNTDIKLVGIDYLSVAAYDDLIPSHLVFLKDRETILVEGLKLDGVKAGLYSVHCLPLRLVGAEGSPIRCILID.

The first 24 residues, 1–24 (MAVPPLFFLLTLLSLPSLLISAGA), serve as a signal peptide directing secretion.

It belongs to the Cyclase 1 superfamily.

Its subcellular location is the secreted. It localises to the extracellular space. The protein resides in the extracellular matrix. In terms of biological role, may function redundantly with CYCLASE1 for normal plant growth, development and viability. The sequence is that of Cyclase-like protein 2 from Arabidopsis thaliana (Mouse-ear cress).